The following is a 187-amino-acid chain: MATTNDLKNGMVLNIDGQLWAVVEFQHVKPGKGPAFVRTKLKNVESNKTVDKTFNAGTKVETATVDRRTMQYLYNDGSSYVFMDVQSYDQLEIAPEIVGNAKNFLLENQEAIVATNEGRVLFIELPASVELEITFTEPGLAGDSATGRTKPATLETGHEIQVPLFINQGEKVKVDTRDSSYLGRVKG.

Belongs to the elongation factor P family.

The protein resides in the cytoplasm. It functions in the pathway protein biosynthesis; polypeptide chain elongation. In terms of biological role, involved in peptide bond synthesis. Stimulates efficient translation and peptide-bond synthesis on native or reconstituted 70S ribosomes in vitro. Probably functions indirectly by altering the affinity of the ribosome for aminoacyl-tRNA, thus increasing their reactivity as acceptors for peptidyl transferase. The protein is Elongation factor P of Nocardioides sp. (strain ATCC BAA-499 / JS614).